Here is a 579-residue protein sequence, read N- to C-terminus: 2-isopropylmalate synthase (579 aa).

The region spanning 40 to 314 (PRWCAVDLRD…DPMIDFSDID (275 aa)) is the Pyruvate carboxyltransferase domain. Mg(2+) contacts are provided by Asp49, His253, His255, and Asn289. The regulatory domain stretch occupies residues 456 to 579 (SSKEDGQWGR…VNRAIRDAQA (124 aa)).

This sequence belongs to the alpha-IPM synthase/homocitrate synthase family. LeuA type 2 subfamily. As to quaternary structure, homodimer. Mg(2+) is required as a cofactor.

It localises to the cytoplasm. It carries out the reaction 3-methyl-2-oxobutanoate + acetyl-CoA + H2O = (2S)-2-isopropylmalate + CoA + H(+). Its pathway is amino-acid biosynthesis; L-leucine biosynthesis; L-leucine from 3-methyl-2-oxobutanoate: step 1/4. Catalyzes the condensation of the acetyl group of acetyl-CoA with 3-methyl-2-oxobutanoate (2-ketoisovalerate) to form 3-carboxy-3-hydroxy-4-methylpentanoate (2-isopropylmalate). The protein is 2-isopropylmalate synthase of Arthrobacter sp. (strain FB24).